Here is a 387-residue protein sequence, read N- to C-terminus: Putative glutamate--cysteine ligase 2 (387 aa).

The protein belongs to the glutamate--cysteine ligase type 2 family. YbdK subfamily.

The catalysed reaction is L-cysteine + L-glutamate + ATP = gamma-L-glutamyl-L-cysteine + ADP + phosphate + H(+). Functionally, ATP-dependent carboxylate-amine ligase which exhibits weak glutamate--cysteine ligase activity. The polypeptide is Putative glutamate--cysteine ligase 2 (Trichormus variabilis (strain ATCC 29413 / PCC 7937) (Anabaena variabilis)).